A 416-amino-acid polypeptide reads, in one-letter code: Phosphoribosylamine--glycine ligase (416 aa).

The ATP-grasp domain occupies 105–310; it reads KSFLKKYRIK…PLELILAATQ (206 aa). Residue 131-192 participates in ATP binding; the sequence is IYSLTPPIVV…EEFLDGYELS (62 aa). Positions 281 and 283 each coordinate Mg(2+).

The protein belongs to the GARS family. The cofactor is Mg(2+). Mn(2+) is required as a cofactor.

It carries out the reaction 5-phospho-beta-D-ribosylamine + glycine + ATP = N(1)-(5-phospho-beta-D-ribosyl)glycinamide + ADP + phosphate + H(+). The protein operates within purine metabolism; IMP biosynthesis via de novo pathway; N(1)-(5-phospho-D-ribosyl)glycinamide from 5-phospho-alpha-D-ribose 1-diphosphate: step 2/2. In Campylobacter jejuni subsp. jejuni serotype O:2 (strain ATCC 700819 / NCTC 11168), this protein is Phosphoribosylamine--glycine ligase.